We begin with the raw amino-acid sequence, 855 residues long: DNA mismatch repair protein MutS (855 aa).

618 to 625 (GPNMGGKS) serves as a coordination point for ATP.

Belongs to the DNA mismatch repair MutS family.

This protein is involved in the repair of mismatches in DNA. It is possible that it carries out the mismatch recognition step. This protein has a weak ATPase activity. In Shewanella loihica (strain ATCC BAA-1088 / PV-4), this protein is DNA mismatch repair protein MutS.